We begin with the raw amino-acid sequence, 287 residues long: MKQYLDLASYVLANGKKRKNRTDTDTLSVFGYQMKFDLTNSFPLLTTKKVNWKAIVHELLWFIKGDTNIKYLVDNGVNIWNEWPYENFKKSPSFQNETLQEFILKVKTDNEFAKQFADLGPVYGKQWRNFNGVDQLKKVIQEIKENPNSRRLIVSSWNPSELEKMALAPCHSLFQFYVEEDKLSLQLYQRSGDIFLGVPFNIASYALLVYLVAHETKLKPGYFIHTLGDAHIYENHIEQIKLQLTRTTLDPPQVVLKSDKSIFAYSFDDIELVGYNYHPFIYGRVAV.

Position 21 (Arg21) interacts with dUMP. Residue Asn51 coordinates (6R)-5,10-methylene-5,6,7,8-tetrahydrofolate. 150–151 (RR) contacts dUMP. Cys170 functions as the Nucleophile in the catalytic mechanism. DUMP-binding positions include 190-193 (RSGD), Asn201, and 231-233 (HIY). Position 193 (Asp193) interacts with (6R)-5,10-methylene-5,6,7,8-tetrahydrofolate. Ala286 contributes to the (6R)-5,10-methylene-5,6,7,8-tetrahydrofolate binding site.

This sequence belongs to the thymidylate synthase family. Bacterial-type ThyA subfamily. Homodimer.

Its subcellular location is the cytoplasm. It catalyses the reaction dUMP + (6R)-5,10-methylene-5,6,7,8-tetrahydrofolate = 7,8-dihydrofolate + dTMP. It functions in the pathway pyrimidine metabolism; dTTP biosynthesis. Its function is as follows. Catalyzes the reductive methylation of 2'-deoxyuridine-5'-monophosphate (dUMP) to 2'-deoxythymidine-5'-monophosphate (dTMP) while utilizing 5,10-methylenetetrahydrofolate (mTHF) as the methyl donor and reductant in the reaction, yielding dihydrofolate (DHF) as a by-product. This enzymatic reaction provides an intracellular de novo source of dTMP, an essential precursor for DNA biosynthesis. This Mycoplasma genitalium (strain ATCC 33530 / DSM 19775 / NCTC 10195 / G37) (Mycoplasmoides genitalium) protein is Thymidylate synthase.